Here is a 700-residue protein sequence, read N- to C-terminus: Protein claret segregational (700 aa).

A phosphoserine mark is found at Ser94 and Ser96. The segment at 141–185 (APSSITATAVKRPPVTRPAPRAAGGAAAKKPAGTGAAASSGAAAA) is disordered. Over residues 149-185 (AVKRPPVTRPAPRAAGGAAAKKPAGTGAAASSGAAAA) the composition is skewed to low complexity. Residues 196–346 (KARFHDLLEK…ELHNTVMDLR (151 aa)) adopt a coiled-coil conformation. A Kinesin motor domain is found at 348–670 (NIRVFCRIRP…LRFAASVNSC (323 aa)). 434–441 (GQTGSGKT) is an ATP binding site. Residues 664–668 (AASVN) are required for minus-end directionality. The tract at residues 681–700 (LNNSVANSSTQSNNSGSFDK) is disordered.

It belongs to the TRAFAC class myosin-kinesin ATPase superfamily. Kinesin family. NCD subfamily.

The protein resides in the cytoplasm. Its subcellular location is the cytoskeleton. The enzyme catalyses ATP + H2O = ADP + phosphate + H(+). Minus-end-directed microtubule-based motor protein. Has ATPase activity. Required for normal chromosomal segregation in meiosis in females, and in early mitotic divisions of the embryo. This is Protein claret segregational (ncd) from Drosophila melanogaster (Fruit fly).